The sequence spans 359 residues: DNA polymerase IV (359 aa).

Positions 4–185 (IIHIDMDCYF…LSLRKIPGVG (182 aa)) constitute a UmuC domain. Asp-8 and Asp-103 together coordinate Mg(2+). The active site involves Glu-104.

Belongs to the DNA polymerase type-Y family. In terms of assembly, monomer. Mg(2+) is required as a cofactor.

Its subcellular location is the cytoplasm. The catalysed reaction is DNA(n) + a 2'-deoxyribonucleoside 5'-triphosphate = DNA(n+1) + diphosphate. Poorly processive, error-prone DNA polymerase involved in untargeted mutagenesis. Copies undamaged DNA at stalled replication forks, which arise in vivo from mismatched or misaligned primer ends. These misaligned primers can be extended by PolIV. Exhibits no 3'-5' exonuclease (proofreading) activity. May be involved in translesional synthesis, in conjunction with the beta clamp from PolIII. This is DNA polymerase IV from Shewanella sp. (strain MR-4).